The following is a 190-amino-acid chain: Abscisic acid receptor PYL2 (190 aa).

An START-like region spans residues 28-182; sequence FEPDPTTCTS…NLQKLGVAAT (155 aa). Residues Lys-64, 93–98, 120–126, and Glu-147 contribute to the abscisate site; these read ASTSTE and RLKNYKS. Positions 89–93 match the Gate loop motif; that stretch reads SGLPA. Positions 119-121 match the Latch loop motif; it reads HRL.

Belongs to the PYR/PYL/RCAR abscisic acid intracellular receptor family. Homodimer. Binds ABA on one subunit only. Interacts with HAB1, ABI1 and ABI2, and possibly with other PP2Cs. Binds to CARs protein in an ABA-independent manner, both at the plasma membrane and in the nucleus.

The protein resides in the cytoplasm. It localises to the nucleus. The protein localises to the cell membrane. Receptor for abscisic acid (ABA) required for ABA-mediated responses such as stomatal closure and germination inhibition. Inhibits the activity of group-A protein phosphatases type 2C (PP2Cs) when activated by ABA. Can be activated by both (-)-ABA and (+)-ABA. The polypeptide is Abscisic acid receptor PYL2 (PYL2) (Arabidopsis thaliana (Mouse-ear cress)).